Reading from the N-terminus, the 237-residue chain is Ribonuclease PH (237 aa).

Phosphate-binding positions include arginine 86 and 124–126; that span reads GTR.

The protein belongs to the RNase PH family. Homohexameric ring arranged as a trimer of dimers.

It carries out the reaction tRNA(n+1) + phosphate = tRNA(n) + a ribonucleoside 5'-diphosphate. Its function is as follows. Phosphorolytic 3'-5' exoribonuclease that plays an important role in tRNA 3'-end maturation. Removes nucleotide residues following the 3'-CCA terminus of tRNAs; can also add nucleotides to the ends of RNA molecules by using nucleoside diphosphates as substrates, but this may not be physiologically important. Probably plays a role in initiation of 16S rRNA degradation (leading to ribosome degradation) during starvation. This chain is Ribonuclease PH, found in Myxococcus xanthus (strain DK1622).